The chain runs to 329 residues: Malate dehydrogenase (329 aa).

Position 13–19 (13–19 (GAAGNIS)) interacts with NAD(+). Positions 94 and 100 each coordinate substrate. Residues Asn107, Gln114, and 131–133 (VGN) each bind NAD(+). 2 residues coordinate substrate: Asn133 and Arg164. The Proton acceptor role is filled by His189.

Belongs to the LDH/MDH superfamily. MDH type 2 family.

The enzyme catalyses (S)-malate + NAD(+) = oxaloacetate + NADH + H(+). Its function is as follows. Catalyzes the reversible oxidation of malate to oxaloacetate. The sequence is that of Malate dehydrogenase from Psychrobacter arcticus (strain DSM 17307 / VKM B-2377 / 273-4).